Here is a 284-residue protein sequence, read N- to C-terminus: Pantothenate synthetase (284 aa).

Residue 30 to 37 (MGNLHEGH) coordinates ATP. H37 serves as the catalytic Proton donor. Q61 lines the (R)-pantoate pocket. Beta-alanine is bound at residue Q61. An ATP-binding site is contributed by 149-152 (GEKD). (R)-pantoate is bound at residue Q155. ATP is bound by residues V178 and 186–189 (LSSR).

This sequence belongs to the pantothenate synthetase family. Homodimer.

It localises to the cytoplasm. It carries out the reaction (R)-pantoate + beta-alanine + ATP = (R)-pantothenate + AMP + diphosphate + H(+). The protein operates within cofactor biosynthesis; (R)-pantothenate biosynthesis; (R)-pantothenate from (R)-pantoate and beta-alanine: step 1/1. Catalyzes the condensation of pantoate with beta-alanine in an ATP-dependent reaction via a pantoyl-adenylate intermediate. In Sodalis glossinidius (strain morsitans), this protein is Pantothenate synthetase.